A 201-amino-acid polypeptide reads, in one-letter code: Adenylyl-sulfate kinase (201 aa).

Positions 1-23 (MALHDENVVWHSHPVTPQQREQH) are disordered. 35–42 (GLSGSGKS) is a binding site for ATP. The active-site Phosphoserine intermediate is the Ser109.

The protein belongs to the APS kinase family.

It carries out the reaction adenosine 5'-phosphosulfate + ATP = 3'-phosphoadenylyl sulfate + ADP + H(+). The protein operates within sulfur metabolism; hydrogen sulfide biosynthesis; sulfite from sulfate: step 2/3. In terms of biological role, catalyzes the synthesis of activated sulfate. This is Adenylyl-sulfate kinase from Escherichia coli O127:H6 (strain E2348/69 / EPEC).